A 144-amino-acid polypeptide reads, in one-letter code: Large ribosomal subunit protein uL11 (144 aa).

The protein belongs to the universal ribosomal protein uL11 family. As to quaternary structure, part of the ribosomal stalk of the 50S ribosomal subunit. Interacts with L10 and the large rRNA to form the base of the stalk. L10 forms an elongated spine to which L12 dimers bind in a sequential fashion forming a multimeric L10(L12)X complex. One or more lysine residues are methylated.

Functionally, forms part of the ribosomal stalk which helps the ribosome interact with GTP-bound translation factors. This Granulibacter bethesdensis (strain ATCC BAA-1260 / CGDNIH1) protein is Large ribosomal subunit protein uL11.